Here is a 155-residue protein sequence, read N- to C-terminus: Small ribosomal subunit protein uS10m (155 aa).

This sequence belongs to the universal ribosomal protein uS10 family. As to quaternary structure, component of the mitochondrial ribosome small subunit (28S) which comprises a 12S rRNA and about 30 distinct proteins.

Its subcellular location is the mitochondrion. The chain is Small ribosomal subunit protein uS10m (Mrps10) from Rattus norvegicus (Rat).